We begin with the raw amino-acid sequence, 128 residues long: Pi-hexatoxin-Hi1c (128 aa).

An N-terminal signal peptide occupies residues methionine 1–glycine 19. A propeptide spanning residues aspartate 20–arginine 47 is cleaved from the precursor. Cystine bridges form between cysteine 54–cysteine 69, cysteine 61–cysteine 74, cysteine 68–cysteine 84, cysteine 93–cysteine 108, cysteine 100–cysteine 113, and cysteine 107–cysteine 124. Domain repeat units follow at residues cysteine 54–cysteine 84 and cysteine 93–cysteine 124. The 2 X approximate repeats with cysteine pattern C-C-CC-C-C stretch occupies residues cysteine 54 to cysteine 124.

It belongs to the psalmotoxin-1 family. Double-knot toxin subfamily. Expressed by the venom gland.

The protein localises to the secreted. This toxin potently and selectively inhibits ASIC1a, an isoform of the gene ASIC1. It incompletely inhibits ASIC1a activation in a pH-independent and slowly reversible manner. This toxin acts by binding to and stabilizing the closed state of the channel, thereby impeding the transition into a conducting state. This toxin may bind to the acidic pocket of ASIC1a, since mutation of a key residue of this pocket (Arg-350) abolishes the ability of the toxin to inhibit ASIC1a. In vivo, this toxin protects the brain from neuronal injury when administered up to 8 hours after stroke onset. This chain is Pi-hexatoxin-Hi1c, found in Hadronyche infensa (Fraser island funnel-web spider).